The following is a 602-amino-acid chain: Glutamine--fructose-6-phosphate aminotransferase [isomerizing] (602 aa).

The Nucleophile; for GATase activity role is filled by Cys2. Positions 2-219 (CGIIGYIGDR…DGEYAILTKD (218 aa)) constitute a Glutamine amidotransferase type-2 domain. SIS domains follow at residues 280–420 (VAEE…VLGT) and 453–592 (LAET…PDKP). Lys597 serves as the catalytic For Fru-6P isomerization activity.

Homodimer.

Its subcellular location is the cytoplasm. The enzyme catalyses D-fructose 6-phosphate + L-glutamine = D-glucosamine 6-phosphate + L-glutamate. In terms of biological role, catalyzes the first step in hexosamine metabolism, converting fructose-6P into glucosamine-6P using glutamine as a nitrogen source. The chain is Glutamine--fructose-6-phosphate aminotransferase [isomerizing] from Thermococcus kodakarensis (strain ATCC BAA-918 / JCM 12380 / KOD1) (Pyrococcus kodakaraensis (strain KOD1)).